The sequence spans 61 residues: Large ribosomal subunit protein bL28 (61 aa).

The interval 1 to 24 (MAKDYVTGKKTTFGNKRSHSLNPT) is disordered. Residues 9-23 (KKTTFGNKRSHSLNP) show a composition bias toward polar residues.

It belongs to the bacterial ribosomal protein bL28 family.

This chain is Large ribosomal subunit protein bL28, found in Lactobacillus acidophilus (strain ATCC 700396 / NCK56 / N2 / NCFM).